Here is a 360-residue protein sequence, read N- to C-terminus: Alanine racemase (360 aa).

The active-site Proton acceptor; specific for D-alanine is K36. K36 is subject to N6-(pyridoxal phosphate)lysine. R132 is a binding site for substrate. Y256 (proton acceptor; specific for L-alanine) is an active-site residue. M304 contributes to the substrate binding site.

The protein belongs to the alanine racemase family. Pyridoxal 5'-phosphate is required as a cofactor.

The catalysed reaction is L-alanine = D-alanine. It participates in amino-acid biosynthesis; D-alanine biosynthesis; D-alanine from L-alanine: step 1/1. Its function is as follows. Catalyzes the interconversion of L-alanine and D-alanine. May also act on other amino acids. This is Alanine racemase (alr) from Pasteurella multocida (strain Pm70).